The primary structure comprises 443 residues: Ribosomal protein uS12 methylthiotransferase RimO (443 aa).

Residues 10–120 (PRVGFVSLGC…VMQAVHRHLP (111 aa)) enclose the MTTase N-terminal domain. 6 residues coordinate [4Fe-4S] cluster: Cys-19, Cys-55, Cys-84, Cys-151, Cys-155, and Cys-158. The region spanning 137–375 (LTPQHYAYLK…DFQEDISTQR (239 aa)) is the Radical SAM core domain. Residues 377-443 (EAKIGREMTV…IHDLYAERVV (67 aa)) form the TRAM domain.

The protein belongs to the methylthiotransferase family. RimO subfamily. [4Fe-4S] cluster is required as a cofactor.

Its subcellular location is the cytoplasm. The enzyme catalyses L-aspartate(89)-[ribosomal protein uS12]-hydrogen + (sulfur carrier)-SH + AH2 + 2 S-adenosyl-L-methionine = 3-methylsulfanyl-L-aspartate(89)-[ribosomal protein uS12]-hydrogen + (sulfur carrier)-H + 5'-deoxyadenosine + L-methionine + A + S-adenosyl-L-homocysteine + 2 H(+). Catalyzes the methylthiolation of an aspartic acid residue of ribosomal protein uS12. This Azoarcus sp. (strain BH72) protein is Ribosomal protein uS12 methylthiotransferase RimO.